A 172-amino-acid polypeptide reads, in one-letter code: Small ribosomal subunit protein uS13 (172 aa).

Residues 131–172 form a disordered region; the sequence is GQRTRTTGRTGVTVGVRRSKAAQAAQQQQKAQASSGGEKKQG. Low complexity predominate over residues 134–163; that stretch reads TRTTGRTGVTVGVRRSKAAQAAQQQQKAQA.

Belongs to the universal ribosomal protein uS13 family. As to quaternary structure, part of the 30S ribosomal subunit. Forms a loose heterodimer with protein S19. Forms two bridges to the 50S subunit in the 70S ribosome.

Located at the top of the head of the 30S subunit, it contacts several helices of the 16S rRNA. In the 70S ribosome it contacts the 23S rRNA (bridge B1a) and protein L5 of the 50S subunit (bridge B1b), connecting the 2 subunits; these bridges are implicated in subunit movement. The chain is Small ribosomal subunit protein uS13 from Sulfurisphaera tokodaii (strain DSM 16993 / JCM 10545 / NBRC 100140 / 7) (Sulfolobus tokodaii).